A 309-amino-acid chain; its full sequence is Protein FdhE (309 aa).

The protein belongs to the FdhE family.

Its subcellular location is the cytoplasm. Necessary for formate dehydrogenase activity. The polypeptide is Protein FdhE (Salmonella choleraesuis (strain SC-B67)).